Reading from the N-terminus, the 87-residue chain is DNA-directed RNA polymerase subunit omega (87 aa).

This sequence belongs to the RNA polymerase subunit omega family. As to quaternary structure, the RNAP catalytic core consists of 2 alpha, 1 beta, 1 beta' and 1 omega subunit. When a sigma factor is associated with the core the holoenzyme is formed, which can initiate transcription.

The enzyme catalyses RNA(n) + a ribonucleoside 5'-triphosphate = RNA(n+1) + diphosphate. In terms of biological role, promotes RNA polymerase assembly. Latches the N- and C-terminal regions of the beta' subunit thereby facilitating its interaction with the beta and alpha subunits. This is DNA-directed RNA polymerase subunit omega from Azotobacter vinelandii (strain DJ / ATCC BAA-1303).